Consider the following 1495-residue polypeptide: Collagen alpha-1(XVII) chain (1495 aa).

Over residues 1-17 (MDSVTKKTRQDGSEVTE) the composition is skewed to basic and acidic residues. Residues 1–138 (MDSVTKKTRQ…VRLQSASPSG (138 aa)) are disordered. Residues 1–435 (MDSVTKKTRQ…CGSCCSWWKW (435 aa)) are Cytoplasmic-facing. The segment at 1-535 (MDSVTKKTRQ…IERGYFRGER (535 aa)) is nonhelical region (NC16). The span at 19-32 (QGGSSSGLKTSSHT) shows a compositional bias: polar residues. Positions 51 to 63 (SSGSGRLNSSSSG) are enriched in low complexity. Polar residues-rich tracts occupy residues 64–80 (YRQT…SPGS) and 95–104 (EGSSSANSSP). Residues 436 to 456 (LLGLLLAWLLLLGLLFGLIAL) traverse the membrane as a helical; Signal-anchor for type II membrane protein segment. At 457-1495 (AEEVRKLKSR…GRRRRRSVGV (1039 aa)) the chain is on the extracellular side. Disordered stretches follow at residues 532-824 (RGER…EKGS), 847-999 (DLQG…SSSQ), 1160-1185 (EFSG…SSGI), 1201-1226 (SISG…TGLL), 1251-1278 (RSYI…LVAG), 1295-1336 (GGSI…GSYG), and 1396-1416 (MSYT…PGIS). The interval 536–1482 (GEPGMKGDMG…KGEKGEKGEQ (947 aa)) is triple-helical region. 2 stretches are compositionally biased toward low complexity: residues 702-711 (PGAKGPAGQA) and 761-773 (RPGA…APGK). Pro residues predominate over residues 786–807 (PGPPGPPGPIGPTGPPGVPGPV). A compositionally biased stretch (low complexity) spans 809 to 818 (PAGLPGQQGP). Pro residues-rich tracts occupy residues 871–886 (PRGP…PPGR), 901–910 (PPGPPGPPGP), 946–955 (PPGPPGPPGP), 981–993 (PPGP…PPGP), 1167–1179 (PPGP…PPGI), 1208–1218 (PPGPPGPPGPP), and 1257–1269 (PPGP…PPGP). Residues 1296 to 1308 (GSIGAEGSHGGSL) are compositionally biased toward gly residues. Low complexity predominate over residues 1309–1336 (GASSSYGSSMSSSMSSYSASMGSDGSYG). Residues 1403–1413 (PPGPPGPPGPP) show a composition bias toward pro residues. Asn1424 carries an N-linked (GlcNAc...) asparagine glycan. The tract at residues 1435–1495 (THGTVRGPPG…GRRRRRSVGV (61 aa)) is disordered. Positions 1472-1481 (PKGEKGEKGE) are enriched in basic and acidic residues. The segment at 1483–1495 (MYSGRRRRRSVGV) is nonhelical region (NC1). The segment covering 1486–1495 (GRRRRRSVGV) has biased composition (basic residues).

As to quaternary structure, homotrimers of alpha 1(XVII)chains. In terms of processing, the intracellular/endo domain is disulfide-linked. Post-translationally, prolines at the third position of the tripeptide repeating unit (G-X-Y) are hydroxylated in some or all of the chains. The ectodomain is shedded from the surface of keratinocytes resulting in a 120-kDa soluble form, also named as 120 kDa linear IgA disease antigen homolog. The shedding is mediated by membrane-bound metalloproteases. In terms of tissue distribution, cornea specific.

It localises to the cell junction. The protein localises to the hemidesmosome. Its subcellular location is the membrane. The protein resides in the secreted. It is found in the extracellular space. It localises to the extracellular matrix. The protein localises to the basement membrane. Functionally, may play a role in the integrity of hemidesmosome and the attachment of basal keratinocytes to the underlying basement membrane. The 120 kDa linear IgA disease antigen homolog is an anchoring filament component involved in dermal-epidermal cohesion. This Gallus gallus (Chicken) protein is Collagen alpha-1(XVII) chain (COL17A1).